The primary structure comprises 354 residues: DNA polymerase IV (354 aa).

Positions 8-189 constitute a UmuC domain; the sequence is IIHIDMDCFY…LPLQKIPGVG (182 aa). Mg(2+) is bound by residues D12 and D107. E108 is a catalytic residue.

It belongs to the DNA polymerase type-Y family. Monomer. Mg(2+) is required as a cofactor.

Its subcellular location is the cytoplasm. The enzyme catalyses DNA(n) + a 2'-deoxyribonucleoside 5'-triphosphate = DNA(n+1) + diphosphate. In terms of biological role, poorly processive, error-prone DNA polymerase involved in untargeted mutagenesis. Copies undamaged DNA at stalled replication forks, which arise in vivo from mismatched or misaligned primer ends. These misaligned primers can be extended by PolIV. Exhibits no 3'-5' exonuclease (proofreading) activity. May be involved in translesional synthesis, in conjunction with the beta clamp from PolIII. In Vibrio vulnificus (strain CMCP6), this protein is DNA polymerase IV.